Consider the following 322-residue polypeptide: Protein mono-ADP-ribosyltransferase PARP16 (322 aa).

At 1–287 the chain is on the cytoplasmic side; sequence MQPSGWAAAR…RASSQLSWFS (287 aa). A PARP alpha-helical domain is found at 5-91; it reads GWAAAREAAG…AWDLVSWILS (87 aa). D37 bears the ADP-ribosyl aspartic acid mark. E70 carries the post-translational modification ADP-ribosyl glutamic acid. A PARP catalytic domain is found at 94–279; sequence VLTIHSAGKA…VYSQKPPKRA (186 aa). An N6-(ADP-ribosyl)lysine mark is found at K110 and K137. NAD(+)-binding residues include H152, Y182, and Y254. The chain crosses the membrane as a helical span at residues 288–308; sequence SHWFTVMISLYLLLLLIVSVI. The Lumenal segment spans residues 309-322; it reads NSSAFQHFWNRAKR.

Belongs to the ARTD/PARP family. In terms of assembly, interacts with KPNB1. Auto-mono-ADP-ribosylated.

It localises to the endoplasmic reticulum membrane. It carries out the reaction L-aspartyl-[protein] + NAD(+) = 4-O-(ADP-D-ribosyl)-L-aspartyl-[protein] + nicotinamide. The enzyme catalyses L-glutamyl-[protein] + NAD(+) = 5-O-(ADP-D-ribosyl)-L-glutamyl-[protein] + nicotinamide. The catalysed reaction is L-lysyl-[protein] + NAD(+) = N(6)-(ADP-D-ribosyl)-L-lysyl-[protein] + nicotinamide + H(+). In absence of activation signal, PARP16 is autoinhibited by the PARP alpha-helical domain (also named HD region), which prevents effective NAD(+)-binding. Activity is highly stimulated by signals, which unfold the PARP alpha-helical domain, relieving autoinhibition. Its function is as follows. Intracellular mono-ADP-ribosyltransferase that plays a role in different processes, such as protein translation and unfolded protein response (UPR), through the mono-ADP-ribosylation of proteins involved in those processes. Acts as an inhibitor of protein translation by catalyzing mono-ADP-ribosylation of ribosomal subunits, such as RPL14 and RPS6, thereby inhibiting polysome assembly and mRNA loading. Mono-ADP-ribosylation of ribosomal subunits is promoted by NMNAT2. Involved in the unfolded protein response (UPR) by ADP-ribosylating and activating EIF2AK3 and ERN1, two important UPR effectors. May also mediate mono-ADP-ribosylation of karyopherin KPNB1 a nuclear import factor. May not modify proteins on arginine or cysteine residues compared to other mono-ADP-ribosyltransferases. This Homo sapiens (Human) protein is Protein mono-ADP-ribosyltransferase PARP16.